The following is a 427-amino-acid chain: 3-phosphoshikimate 1-carboxyvinyltransferase (427 aa).

Residues Lys-20, Ser-21, and Arg-25 each contribute to the 3-phosphoshikimate site. A phosphoenolpyruvate-binding site is contributed by Lys-20. Positions 92 and 120 each coordinate phosphoenolpyruvate. 3-phosphoshikimate-binding residues include Ser-166, Gln-168, Asp-312, and Lys-339. Gln-168 provides a ligand contact to phosphoenolpyruvate. Asp-312 serves as the catalytic Proton acceptor. 2 residues coordinate phosphoenolpyruvate: Arg-343 and Arg-385.

The protein belongs to the EPSP synthase family. In terms of assembly, monomer.

The protein resides in the cytoplasm. It carries out the reaction 3-phosphoshikimate + phosphoenolpyruvate = 5-O-(1-carboxyvinyl)-3-phosphoshikimate + phosphate. The protein operates within metabolic intermediate biosynthesis; chorismate biosynthesis; chorismate from D-erythrose 4-phosphate and phosphoenolpyruvate: step 6/7. In terms of biological role, catalyzes the transfer of the enolpyruvyl moiety of phosphoenolpyruvate (PEP) to the 5-hydroxyl of shikimate-3-phosphate (S3P) to produce enolpyruvyl shikimate-3-phosphate and inorganic phosphate. This is 3-phosphoshikimate 1-carboxyvinyltransferase from Streptococcus thermophilus (strain CNRZ 1066).